Here is a 228-residue protein sequence, read N- to C-terminus: Cytochrome c oxidase subunit 2 (228 aa).

Residues 1–26 (MPNWGQVMFQDAASSVMLQLVSFHDH) are Mitochondrial intermembrane-facing. A helical membrane pass occupies residues 27–47 (ALLVLTLVLTVVGYALLALML). Over 48–60 (NKQVNRYIMEAQT) the chain is Mitochondrial matrix. The helical transmembrane segment at 61-81 (VETIWTILPALILLVLALPSL) threads the bilayer. At 82–228 (RILYITDEVS…FMSWVSNFKP (147 aa)) the chain is on the mitochondrial intermembrane side. The Cu cation site is built by H161, C196, E198, C200, H204, and M207. E198 is a binding site for Mg(2+).

The protein belongs to the cytochrome c oxidase subunit 2 family. In terms of assembly, component of the cytochrome c oxidase (complex IV, CIV), a multisubunit enzyme composed of a catalytic core of 3 subunits and several supernumerary subunits. The complex exists as a monomer or a dimer and forms supercomplexes (SCs) in the inner mitochondrial membrane with ubiquinol-cytochrome c oxidoreductase (cytochrome b-c1 complex, complex III, CIII). It depends on Cu cation as a cofactor.

It is found in the mitochondrion inner membrane. It carries out the reaction 4 Fe(II)-[cytochrome c] + O2 + 8 H(+)(in) = 4 Fe(III)-[cytochrome c] + 2 H2O + 4 H(+)(out). Functionally, component of the cytochrome c oxidase, the last enzyme in the mitochondrial electron transport chain which drives oxidative phosphorylation. The respiratory chain contains 3 multisubunit complexes succinate dehydrogenase (complex II, CII), ubiquinol-cytochrome c oxidoreductase (cytochrome b-c1 complex, complex III, CIII) and cytochrome c oxidase (complex IV, CIV), that cooperate to transfer electrons derived from NADH and succinate to molecular oxygen, creating an electrochemical gradient over the inner membrane that drives transmembrane transport and the ATP synthase. Cytochrome c oxidase is the component of the respiratory chain that catalyzes the reduction of oxygen to water. Electrons originating from reduced cytochrome c in the intermembrane space (IMS) are transferred via the dinuclear copper A center (CU(A)) of subunit 2 and heme A of subunit 1 to the active site in subunit 1, a binuclear center (BNC) formed by heme A3 and copper B (CU(B)). The BNC reduces molecular oxygen to 2 water molecules using 4 electrons from cytochrome c in the IMS and 4 protons from the mitochondrial matrix. This is Cytochrome c oxidase subunit 2 (COII) from Lumbricus terrestris (Common earthworm).